Reading from the N-terminus, the 220-residue chain is Ribosomal RNA large subunit methyltransferase E (220 aa).

Positions 64, 66, 84, 100, and 125 each coordinate S-adenosyl-L-methionine. The Proton acceptor role is filled by Lys-165.

It belongs to the class I-like SAM-binding methyltransferase superfamily. RNA methyltransferase RlmE family.

The protein localises to the cytoplasm. The catalysed reaction is uridine(2552) in 23S rRNA + S-adenosyl-L-methionine = 2'-O-methyluridine(2552) in 23S rRNA + S-adenosyl-L-homocysteine + H(+). Specifically methylates the uridine in position 2552 of 23S rRNA at the 2'-O position of the ribose in the fully assembled 50S ribosomal subunit. The sequence is that of Ribosomal RNA large subunit methyltransferase E from Thiobacillus denitrificans (strain ATCC 25259 / T1).